The primary structure comprises 232 residues: Platelet-activating factor acetylhydrolase IB subunit alpha1 (232 aa).

The residue at position 2 (Ser2) is an N-acetylserine. Position 2 is a phosphoserine (Ser2). Residues Ser47, Asp192, and His195 contribute to the active site.

Belongs to the 'GDSL' lipolytic enzyme family. Platelet-activating factor acetylhydrolase IB beta/gamma subunits subfamily. As to quaternary structure, forms a catalytic dimer which is either homodimer (alpha1/alpha1 homodimer) or heterodimer with PAFAH1B2 (alpha1/alpha2 heterodimer). Component of the cytosolic (PAF-AH (I)) heterotetrameric enzyme, which is composed of PAFAH1B1 (beta), PAFAH1B2 (alpha2) and PAFAH1B3 (alpha1) subunits. The catalytic activity of the enzyme resides in the alpha1 (PAFAH1B3) and alpha2 (PAFAH1B2) subunits, whereas the beta subunit (PAFAH1B1) has regulatory activity. Trimer formation is not essential for the catalytic activity. Interacts with VLDLR; this interaction may modulate the Reelin pathway.

The protein localises to the cytoplasm. The catalysed reaction is a 1-O-alkyl-2-acetyl-sn-glycero-3-phosphocholine + H2O = a 1-O-alkyl-sn-glycero-3-phosphocholine + acetate + H(+). The enzyme catalyses 1-O-hexadecyl-2-acetyl-sn-glycero-3-phosphocholine + H2O = 1-O-hexadecyl-sn-glycero-3-phosphocholine + acetate + H(+). It catalyses the reaction 1-O-hexadecyl-2-acetyl-sn-glycero-3-phosphate + H2O = 1-O-hexadecyl-sn-glycero-3-phosphate + acetate + H(+). Its activity is regulated as follows. Beta subunit (PAFAH1B1) inhibits the acetylhydrolase activity of the alpha1/alpha1 catalytic homodimer. Its function is as follows. Alpha1 catalytic subunit of the cytosolic type I platelet-activating factor (PAF) acetylhydrolase (PAF-AH (I)) heterotetrameric enzyme that catalyzes the hydrolyze of the acetyl group at the sn-2 position of PAF and its analogs and modulates the action of PAF. The activity and substrate specificity of PAF-AH (I) are affected by its subunit composition. Both alpha1/alpha1 homodimer (PAFAH1B3/PAFAH1B3 homodimer) and alpha1/alpha2 heterodimer(PAFAH1B3/PAFAH1B2 heterodimer) hydrolyze 1-O-alkyl-2-acetyl-sn-glycero-3-phosphoric acid (AAGPA) more efficiently than PAF, but they have little hydrolytic activity towards 1-O-alkyl-2-acetyl-sn-glycero-3-phosphorylethanolamine (AAGPE). Plays an important role during the development of brain. This chain is Platelet-activating factor acetylhydrolase IB subunit alpha1, found in Bos taurus (Bovine).